Consider the following 475-residue polypeptide: ATP synthase subunit beta, chloroplastic (475 aa).

155–162 is an ATP binding site; it reads GGAGVGKT.

This sequence belongs to the ATPase alpha/beta chains family. In terms of assembly, F-type ATPases have 2 components, CF(1) - the catalytic core - and CF(0) - the membrane proton channel. CF(1) has five subunits: alpha(3), beta(3), gamma(1), delta(1), epsilon(1). CF(0) has four main subunits: a(1), b(1), b'(1) and c(9-12).

It localises to the plastid. It is found in the chloroplast thylakoid membrane. The catalysed reaction is ATP + H2O + 4 H(+)(in) = ADP + phosphate + 5 H(+)(out). Its function is as follows. Produces ATP from ADP in the presence of a proton gradient across the membrane. The catalytic sites are hosted primarily by the beta subunits. In Pyropia yezoensis (Susabi-nori), this protein is ATP synthase subunit beta, chloroplastic.